Here is a 131-residue protein sequence, read N- to C-terminus: Protein FON2 SPARE1 (131 aa).

The signal sequence occupies residues 1–22 (MSRRLGAAAAVLLLWLAVLTFA). The interval 67–131 (SPSSLTTTDR…VPTGPNPLHH (65 aa)) is disordered. Residues 76 to 97 (RHHHHHRHHGHHHHRGHDRWNR) are compositionally biased toward basic residues.

The protein belongs to the CLV3/ESR signal peptide family. Expressed in all aerial apical meristems, including the floral and inflorescence meristems in the reproductive phase and the shoot apical meristem in the vegetative phase. Also detected in the primordia of lateral organs such as the leaf and the floral organs.

It localises to the secreted. Involved in the maintenance of the floral meristem and of the shoot apical meristem in the vegetative phase. Suppresses the fon2 mutation and acts independently of FON1. In Oryza sativa subsp. japonica, the protein has a single amino acid substitution at the putative processing site of the signal peptide and is inactive. The polypeptide is Protein FON2 SPARE1 (FOS1) (Oryza sativa subsp. indica (Rice)).